A 264-amino-acid polypeptide reads, in one-letter code: Thymidylate synthase (264 aa).

Residues R21 and 126-127 (RR) contribute to the dUMP site. Residue C146 is the Nucleophile of the active site. DUMP is bound by residues 166 to 169 (RSAD), N177, and 207 to 209 (HLY). (6R)-5,10-methylene-5,6,7,8-tetrahydrofolate is bound at residue D169. A263 provides a ligand contact to (6R)-5,10-methylene-5,6,7,8-tetrahydrofolate.

It belongs to the thymidylate synthase family. Bacterial-type ThyA subfamily. In terms of assembly, homodimer.

It localises to the cytoplasm. The enzyme catalyses dUMP + (6R)-5,10-methylene-5,6,7,8-tetrahydrofolate = 7,8-dihydrofolate + dTMP. It functions in the pathway pyrimidine metabolism; dTTP biosynthesis. Its function is as follows. Catalyzes the reductive methylation of 2'-deoxyuridine-5'-monophosphate (dUMP) to 2'-deoxythymidine-5'-monophosphate (dTMP) while utilizing 5,10-methylenetetrahydrofolate (mTHF) as the methyl donor and reductant in the reaction, yielding dihydrofolate (DHF) as a by-product. This enzymatic reaction provides an intracellular de novo source of dTMP, an essential precursor for DNA biosynthesis. This Afipia carboxidovorans (strain ATCC 49405 / DSM 1227 / KCTC 32145 / OM5) (Oligotropha carboxidovorans) protein is Thymidylate synthase.